The primary structure comprises 309 residues: MTVLHSAPRWSSNEGVLDTLVAALGDMVAASREEHGEILLTVVRDRVEDALRLLRDDHEYQQLMDIAGVDYPQRAERFDVCYCLLSVTKNHRVIVKVSTDEATPVPTVTTLWPNAGWYEREVYDMFGVLFAGNPDLRRILTDYGFQGHPFRKDFPLTGYVELRYSEEDKRVVYEPVQLAQDLRQFDFMSPWEGADYVLPGDEKAVPPPPAPAPVATAPETKGDAKADVPKTTEQPADTGAGEKANDAAAKPVAEAAAPAATKTDEPAAPEPTEDRPARKPRAKKVADTEGATEPAAKPKRTRKKKEDGE.

A disordered region spans residues Leu198–Glu309. Residues Thr220–Lys230 are compositionally biased toward basic and acidic residues. The span at Asp246–Thr261 shows a compositional bias: low complexity.

The protein belongs to the complex I 30 kDa subunit family. As to quaternary structure, NDH-1 is composed of 14 different subunits. Subunits NuoB, C, D, E, F, and G constitute the peripheral sector of the complex.

Its subcellular location is the cell inner membrane. The enzyme catalyses a quinone + NADH + 5 H(+)(in) = a quinol + NAD(+) + 4 H(+)(out). Functionally, NDH-1 shuttles electrons from NADH, via FMN and iron-sulfur (Fe-S) centers, to quinones in the respiratory chain. The immediate electron acceptor for the enzyme in this species is believed to be ubiquinone. Couples the redox reaction to proton translocation (for every two electrons transferred, four hydrogen ions are translocated across the cytoplasmic membrane), and thus conserves the redox energy in a proton gradient. The sequence is that of NADH-quinone oxidoreductase subunit C from Novosphingobium aromaticivorans (strain ATCC 700278 / DSM 12444 / CCUG 56034 / CIP 105152 / NBRC 16084 / F199).